A 31-amino-acid chain; its full sequence is Photosystem II reaction center protein T (31 aa).

The chain crosses the membrane as a helical span at residues 3–23; sequence SFAYILILGLAIATLFFAIAF.

This sequence belongs to the PsbT family. As to quaternary structure, PSII is composed of 1 copy each of membrane proteins PsbA, PsbB, PsbC, PsbD, PsbE, PsbF, PsbH, PsbI, PsbJ, PsbK, PsbL, PsbM, PsbT, PsbX, PsbY, PsbZ, Psb30/Ycf12, peripheral proteins PsbO, CyanoQ (PsbQ), PsbU, PsbV and a large number of cofactors. It forms dimeric complexes.

The protein resides in the cellular thylakoid membrane. Functionally, found at the monomer-monomer interface of the photosystem II (PS II) dimer, plays a role in assembly and dimerization of PSII. PSII is a light-driven water plastoquinone oxidoreductase, using light energy to abstract electrons from H(2)O, generating a proton gradient subsequently used for ATP formation. This is Photosystem II reaction center protein T from Synechococcus sp. (strain CC9311).